Reading from the N-terminus, the 266-residue chain is MLAKRIIPCLDVTGGRVVKGVNFLELRDAGDPVEIAARYNGQGADELTFLDITATSDGRDLILPIIEAVASQVFIPLTVGGGVRTVEDVRRLLNAGADKTSFNSAAIANPEVIDAASAKYGAQCIVVAIDAKRRTPEEAARPGPDGAPRGEGWDVYSHGGRKNTGLDAVQWAAEMARRGAGEILLTSMDRDGTKSGFDLALTRAVSDAVSVPVIASGGVGGLDDLADGVQQGGADAVLAASIFHYGEYTVAQAKERMAARGIPVRL.

Residues aspartate 11 and aspartate 130 contribute to the active site. Residues 134 to 157 form a disordered region; it reads RTPEEAARPGPDGAPRGEGWDVYS.

Belongs to the HisA/HisF family. Heterodimer of HisH and HisF.

The protein resides in the cytoplasm. The enzyme catalyses 5-[(5-phospho-1-deoxy-D-ribulos-1-ylimino)methylamino]-1-(5-phospho-beta-D-ribosyl)imidazole-4-carboxamide + L-glutamine = D-erythro-1-(imidazol-4-yl)glycerol 3-phosphate + 5-amino-1-(5-phospho-beta-D-ribosyl)imidazole-4-carboxamide + L-glutamate + H(+). The protein operates within amino-acid biosynthesis; L-histidine biosynthesis; L-histidine from 5-phospho-alpha-D-ribose 1-diphosphate: step 5/9. Its function is as follows. IGPS catalyzes the conversion of PRFAR and glutamine to IGP, AICAR and glutamate. The HisF subunit catalyzes the cyclization activity that produces IGP and AICAR from PRFAR using the ammonia provided by the HisH subunit. In Paracidovorax citrulli (strain AAC00-1) (Acidovorax citrulli), this protein is Imidazole glycerol phosphate synthase subunit HisF.